Consider the following 71-residue polypeptide: Sec-independent protein translocase protein TatA (71 aa).

The helical transmembrane segment at 1 to 21 threads the bilayer; sequence MGSFSMWHWLIVLAIVLLLFG. The segment at 40–71 is disordered; it reads KKGMSDDDTAPDGTPKPADQSKTVDHRADDHK. A compositionally biased stretch (basic and acidic residues) spans 61–71; sequence KTVDHRADDHK.

The protein belongs to the TatA/E family. The Tat system comprises two distinct complexes: a TatABC complex, containing multiple copies of TatA, TatB and TatC subunits, and a separate TatA complex, containing only TatA subunits. Substrates initially bind to the TatABC complex, which probably triggers association of the separate TatA complex to form the active translocon.

The protein localises to the cell inner membrane. In terms of biological role, part of the twin-arginine translocation (Tat) system that transports large folded proteins containing a characteristic twin-arginine motif in their signal peptide across membranes. TatA could form the protein-conducting channel of the Tat system. This is Sec-independent protein translocase protein TatA from Allorhizobium ampelinum (strain ATCC BAA-846 / DSM 112012 / S4) (Agrobacterium vitis (strain S4)).